The primary structure comprises 536 residues: Maintenance of mitochondrial morphology protein 1 (536 aa).

At 1 to 25 the chain is on the lumenal side; the sequence is MAGPSNQTQPPPPVLTQPSLSFTQG. The chain crosses the membrane as a helical span at residues 26-46; sequence LLVGQLSVVLLIGAFIKFFIF. The Cytoplasmic segment spans residues 47-536; the sequence is GEAPPHPSRN…GSMPDPVVVT (490 aa). 4 disordered regions span residues 52 to 135, 275 to 331, 416 to 467, and 505 to 536; these read HPSR…SHQP, GPGT…ATAA, GRTG…GGSM, and YGGAQGGGGGGGRGGEEQFAIPGSMPDPVVVT. Composition is skewed to polar residues over residues 69-81, 88-105, and 112-121; these read YSLNSISADSSPR, STSNILRPVPSSSTNTRS, and YSATPTNPTS. Positions 122-132 are enriched in basic residues; it reads KHSRSRPHHSS. The region spanning 134 to 409 is the SMP-LTD domain; the sequence is QPESLDWFNV…EPRVQVVGLP (276 aa). Over residues 321–331 the composition is skewed to low complexity; that stretch reads TNTNTAGATAA. Composition is skewed to gly residues over residues 442 to 467 and 507 to 517; these read TAGGDGVGVRGGGGGGGVGGSGGGSM and GAQGGGGGGGR.

It belongs to the MMM1 family. As to quaternary structure, homodimer. Component of the ER-mitochondria encounter structure (ERMES) or MDM complex, composed of MMM1, MDM10, MDM12 and MDM34. An MMM1 homodimer associates with one molecule of MDM12 on each side in a pairwise head-to-tail manner, and the SMP-LTD domains of MMM1 and MDM12 generate a continuous hydrophobic tunnel for phospholipid trafficking.

The protein localises to the endoplasmic reticulum membrane. Its function is as follows. Component of the ERMES/MDM complex, which serves as a molecular tether to connect the endoplasmic reticulum (ER) and mitochondria. Components of this complex are involved in the control of mitochondrial shape and protein biogenesis, and function in nonvesicular lipid trafficking between the ER and mitochondria. The MDM12-MMM1 subcomplex functions in the major beta-barrel assembly pathway that is responsible for biogenesis of all outer membrane beta-barrel proteins, and acts in a late step after the SAM complex. The MDM10-MDM12-MMM1 subcomplex further acts in the TOM40-specific pathway after the action of the MDM12-MMM1 complex. Essential for establishing and maintaining the structure of mitochondria and maintenance of mtDNA nucleoids. The polypeptide is Maintenance of mitochondrial morphology protein 1 (Ajellomyces dermatitidis (strain ER-3 / ATCC MYA-2586) (Blastomyces dermatitidis)).